The primary structure comprises 353 residues: MLMRSVCFILLAVLLFSLSACEPSHQQQKQASAAKDEKKDIIPLSAEKADGAEGWLNNSTILYTASNPTKTELFAYRIFTGKAKKLYQTDGQIVDVQINAREQMILLQITHSQKTAVVLLNAEGETLYEKDYETYELEAAWNQYDPYQMMVTEFNENWDFHTYQVNAKKDESFLSPVQVPFIHWTSKNTFDYVKEGRDDKTGPLYTFDTASKTEQKLEDNVLFFDSFHQMSFTVKSASGGKGTYQFKTPQSTSPVTAKWPLQAKYTSLAPMEYDYDEAGGLFYTFKQSGDAYKLAAINVASGETKDLVSLREMEPIQISPNGKYALYGFHFEQIILLKSHETKQLIIDQKEME.

Residues 1-20 (MLMRSVCFILLAVLLFSLSA) form the signal peptide. A lipid anchor (N-palmitoyl cysteine) is attached at Cys-21. Cys-21 carries the S-diacylglycerol cysteine lipid modification.

It localises to the cell membrane. This is an uncharacterized protein from Bacillus subtilis (strain 168).